The following is a 67-amino-acid chain: Large ribosomal subunit protein bL35 (67 aa).

Belongs to the bacterial ribosomal protein bL35 family.

The chain is Large ribosomal subunit protein bL35 from Picosynechococcus sp. (strain ATCC 27264 / PCC 7002 / PR-6) (Agmenellum quadruplicatum).